A 275-amino-acid polypeptide reads, in one-letter code: Large ribosomal subunit protein uL2 (275 aa).

The segment at Val-223–Lys-275 is disordered.

The protein belongs to the universal ribosomal protein uL2 family. Part of the 50S ribosomal subunit. Forms a bridge to the 30S subunit in the 70S ribosome.

Functionally, one of the primary rRNA binding proteins. Required for association of the 30S and 50S subunits to form the 70S ribosome, for tRNA binding and peptide bond formation. It has been suggested to have peptidyltransferase activity; this is somewhat controversial. Makes several contacts with the 16S rRNA in the 70S ribosome. This Psychromonas ingrahamii (strain DSM 17664 / CCUG 51855 / 37) protein is Large ribosomal subunit protein uL2.